We begin with the raw amino-acid sequence, 318 residues long: MREEVERKIKEVLGVKEETLKYEGVFRRRKRKGAKEYEYLEAKFYDIEEKKIVNVHVPVKKENLVLELDRHWKESKKREKELEKRLKEIISEYKNPDLIREILERLLEEGIRREAKDYAYEKYKKEALELFERFKPYLIKLRRERLKRINLLQALYLLANVKEMFQEKEEELEKVMERAVKTILFRDQNQKLQSPLGVLKNDFFLPKETPYDFLLSRFLQAELEPVLEKLLKAEIEKEETQEAMGEIAEFLTELSEEAKSRVLKVFPSFSQFSKVLYREWKKSGQSLKDFLVDWKSFLEFKGKEAEKEVLNVLSKLNL.

It to A.aeolicus AA07 and AA34.

This is an uncharacterized protein from Aquifex aeolicus (strain VF5).